Consider the following 54-residue polypeptide: Large ribosomal subunit protein bL33B (54 aa).

This sequence belongs to the bacterial ribosomal protein bL33 family.

This Mycolicibacterium smegmatis (strain ATCC 700084 / mc(2)155) (Mycobacterium smegmatis) protein is Large ribosomal subunit protein bL33B.